Here is a 400-residue protein sequence, read N- to C-terminus: Acetate kinase (400 aa).

Position 10 (asparagine 10) interacts with Mg(2+). Position 17 (lysine 17) interacts with ATP. Arginine 91 is a binding site for substrate. The Proton donor/acceptor role is filled by aspartate 150. Residues 210–214 (HLGGG), 285–287 (DFR), and 333–337 (GIGEN) each bind ATP. Glutamate 387 contacts Mg(2+).

This sequence belongs to the acetokinase family. As to quaternary structure, homodimer. Requires Mg(2+) as cofactor. Mn(2+) is required as a cofactor.

Its subcellular location is the cytoplasm. The catalysed reaction is acetate + ATP = acetyl phosphate + ADP. Its pathway is metabolic intermediate biosynthesis; acetyl-CoA biosynthesis; acetyl-CoA from acetate: step 1/2. Functionally, catalyzes the formation of acetyl phosphate from acetate and ATP. Can also catalyze the reverse reaction. The protein is Acetate kinase of Buchnera aphidicola subsp. Baizongia pistaciae (strain Bp).